The chain runs to 256 residues: Pimeloyl-[acyl-carrier protein] methyl ester esterase (256 aa).

One can recognise an AB hydrolase-1 domain in the interval 15-242; the sequence is HLVLLHGWGL…AAHAPFISHP (228 aa). Substrate is bound by residues Trp22, 82–83, and 143–147; these read SL and FLALQ. Ser82 (nucleophile) is an active-site residue. Catalysis depends on residues Asp207 and His235. His235 is a binding site for substrate.

The protein belongs to the AB hydrolase superfamily. Carboxylesterase BioH family. In terms of assembly, monomer.

It is found in the cytoplasm. It carries out the reaction 6-carboxyhexanoyl-[ACP] methyl ester + H2O = 6-carboxyhexanoyl-[ACP] + methanol + H(+). It participates in cofactor biosynthesis; biotin biosynthesis. In terms of biological role, the physiological role of BioH is to remove the methyl group introduced by BioC when the pimeloyl moiety is complete. It allows to synthesize pimeloyl-ACP via the fatty acid synthetic pathway through the hydrolysis of the ester bonds of pimeloyl-ACP esters. The sequence is that of Pimeloyl-[acyl-carrier protein] methyl ester esterase from Escherichia coli O17:K52:H18 (strain UMN026 / ExPEC).